The following is a 322-amino-acid chain: Myeloid-associated differentiation marker (322 aa).

The interval 1-25 (MPVTVTRTTITTTTTSSSGQGSPTI) is disordered. Ser-22 is modified (phosphoserine). 2 MARVEL domains span residues 31-163 (ALTQ…ARPG) and 168-319 (YMAT…HLVF). The next 8 membrane-spanning stretches (helical) occupy residues 41-61 (LLQLVSTCVAFSLVASVGAWT), 70-90 (FTWCFCFSVTLIILIVELCGL), 101-121 (FPITFACYAALFCLSASIIYP), 137-157 (AIAATFFSCIACVAYATEVAW), 171-191 (TVPGLLKVLETFVACIIFAFI), 203-223 (LEWCVAVYAICFILAAIAILL), 239-259 (FLSGLALLSVLLYATALVLWP), and 294-314 (LAVAILTAINLLAYVADLVHS).

It belongs to the MAL family.

It is found in the membrane. In Pongo abelii (Sumatran orangutan), this protein is Myeloid-associated differentiation marker (MYADM).